Here is a 2323-residue protein sequence, read N- to C-terminus: C2 domain-containing protein 3 (2323 aa).

Disordered stretches follow at residues 1–27 (MKQRKGQGPGGGRGRKKRGLSDISPST), 193–215 (RELRENTESSNTQSMIPSRSCRG), 402–426 (WNGLGSPPDSPTPGSDEYCSSDLND), 444–509 (SDVG…HTPA), 537–556 (PDSPHMTPSRKNFAGKPPKP), and 698–745 (KLSS…TKKT). The segment covering 200 to 209 (ESSNTQSMIP) has biased composition (polar residues). The residue at position 453 (S453) is a Phosphoserine. Basic and acidic residues predominate over residues 474 to 483 (KVVESKEQKQ). The C2 1 domain occupies 504-663 (PGHTPAMSLS…IQSELLSFSS (160 aa)). Over residues 698–735 (KLSSSTQPAPVSAATSSDTILPETGQDTACTRNPQSSN) the composition is skewed to polar residues. S713 is subject to Phosphoserine. C2 domains follow at residues 771–903 (SCNL…SRLL), 969–1131 (QPPV…YRED), 1155–1323 (SSGF…TGWY), and 1383–1517 (KEEE…TLTI). The span at 1550–1574 (EPARELDSMDCSSHSESEQHPRKSD) shows a compositional bias: basic and acidic residues. 2 disordered regions span residues 1550–1599 (EPAR…NSAA) and 1798–1824 (LAHTSPKEDGLSSPARNGAIRSQAARH). The span at 1584–1599 (LQTSPTSTQVHGNSAA) shows a compositional bias: polar residues. The region spanning 1598–1726 (AAAQVCPAQE…SGFQFICGWY (129 aa)) is the C2 6 domain. Phosphoserine is present on S1871. Disordered regions lie at residues 1891–1918 (FSSQSSPAVSQSQESQRDPVAAGTGRQD), 1952–2013 (ALTS…GGML), 2074–2163 (SEVL…SVGW), 2182–2231 (SEAF…EVST), and 2261–2323 (SHSP…TEET). Low complexity predominate over residues 1892 to 1904 (SSQSSPAVSQSQE). Polar residues-rich tracts occupy residues 1952-1965 (ALTSQQARSRSRAV) and 2074-2083 (SEVLSPQPTE). Over residues 2110 to 2125 (AVSPQPAQGSPSQSGV) the composition is skewed to low complexity. Over residues 2147-2158 (PSLTFSEAQEGS) the composition is skewed to polar residues. A compositionally biased stretch (low complexity) spans 2182 to 2197 (SEAFSSEFSDSSESFE). A compositionally biased stretch (basic and acidic residues) spans 2207–2216 (SKREDYKDSP). The segment covering 2222–2231 (QVPTGSEVST) has biased composition (polar residues).

Interacts with OFD1; OFD1 may act as a negative regulator of C2CD3. Associates with the BBSome complex. Interacts with IFT88, BBS4 and PCM1.

The protein localises to the cytoplasm. It localises to the cytoskeleton. It is found in the cilium basal body. The protein resides in the microtubule organizing center. Its subcellular location is the centrosome. The protein localises to the centriole. Functionally, component of the centrioles that acts as a positive regulator of centriole elongation. Promotes assembly of centriolar distal appendage, a structure at the distal end of the mother centriole that acts as an anchor of the cilium, and is required for recruitment of centriolar distal appendages proteins CEP83, SCLT1, CEP89, FBF1 and CEP164. Not required for centriolar satellite integrity or RAB8 activation. Required for primary cilium formation. Required for sonic hedgehog/SHH signaling and for proteolytic processing of GLI3. This Mus musculus (Mouse) protein is C2 domain-containing protein 3 (C2cd3).